The chain runs to 333 residues: Minor fimbrium tip subunit MfA4 (333 aa).

An N-terminal signal peptide occupies residues 1–18; the sequence is MKKYLLYASLLTSVLLFS. Cysteine 19 carries the N-palmitoyl cysteine lipid modification. Cysteine 19 carries the S-diacylglycerol cysteine lipid modification. The propeptide occupies 19–53; it reads CSKNNPSEPVEDRSIEISIRVDDFTKTGETVRYER.

This sequence belongs to the bacteroidetes fimbrillin superfamily. FimA/Mfa1 family. In terms of assembly, component of the fimbrium tip. Minor fimbriae are composed of a structural subunit, most often Mfa1, and the accessory subunits Mfa3, Mfa4 and Mfa5. Mfa4 is required for Mfa3 and Mfa5 insertion into the fimbrium. Fimbrium assembly occurs by linear, head-to-tail oligomerization of fimbrial subunits. This is mediated via insertion of a C-terminal beta-strand from one subunit into a groove in the N-terminal domain of the following subunit.

Its subcellular location is the fimbrium. It localises to the cell outer membrane. Its function is as follows. Tip subunit of the minor fimbriae. These filamentous pili are attached to the cell surface; they mediate biofilm formation, adhesion onto host cells and onto other bacteria that are part of the oral microbiome. They play an important role in invasion of periodontal tissues and are recognized as major virulence factors. The protein is Minor fimbrium tip subunit MfA4 of Porphyromonas gingivalis (strain ATCC 33277 / DSM 20709 / CIP 103683 / JCM 12257 / NCTC 11834 / 2561).